The primary structure comprises 814 residues: Ubiquitin carboxyl-terminal hydrolase 45 (814 aa).

The span at 1-14 (MRVKDPTKALPEKA) shows a compositional bias: basic and acidic residues. The interval 1–28 (MRVKDPTKALPEKAKRSKRPTVPHDEDS) is disordered. An interaction with ERCC1 region spans residues 1–62 (MRVKDPTKAL…AIAENLWSVC (62 aa)). Ser28 and Ser29 each carry phosphoserine. Residues 36–153 (LTCQHVSHAI…AQIVDFLQKH (118 aa)) form a UBP-type zinc finger. Cys38, His40, Cys62, Cys65, Cys85, Cys88, Cys93, His101, His105, His114, Cys127, and Cys130 together coordinate Zn(2+). A USP domain is found at 190–813 (RGITNLGNTC…QAYLLFYERV (624 aa)). Cys199 functions as the Nucleophile in the catalytic mechanism. 2 disordered regions span residues 418 to 443 (IENIHQPRAAKKHSSSKDKSQLIHDR) and 479 to 533 (ESRL…PDGP). Residues 432 to 443 (SSKDKSQLIHDR) show a composition bias toward basic and acidic residues. Phosphoserine occurs at positions 508 and 526. Positions 515-527 (KQTGLFRSSSGSG) are enriched in polar residues. His746 acts as the Proton acceptor in catalysis.

The protein belongs to the peptidase C19 family. As to quaternary structure, interacts with ERCC1. The catalytically active form interacts with SPDL1. Widely expressed. High expression is detected in the cerebellum. In the eye, it is expressed at high levels in the optic nerve, sclera and retina, with relatively low levels in the choroid, lens and retinal pigment epithelium.

The protein localises to the photoreceptor inner segment. It localises to the cytoplasm. Its subcellular location is the nucleus. The catalysed reaction is Thiol-dependent hydrolysis of ester, thioester, amide, peptide and isopeptide bonds formed by the C-terminal Gly of ubiquitin (a 76-residue protein attached to proteins as an intracellular targeting signal).. In terms of biological role, catalyzes the deubiquitination of SPDL1. Plays a role in the repair of UV-induced DNA damage via deubiquitination of ERCC1, promoting its recruitment to DNA damage sites. May be involved in the maintenance of photoreceptor function. May play a role in normal retinal development. Plays a role in cell migration. The polypeptide is Ubiquitin carboxyl-terminal hydrolase 45 (USP45) (Homo sapiens (Human)).